The primary structure comprises 371 residues: Glutamate 5-kinase (371 aa).

Lysine 8 contributes to the ATP binding site. 3 residues coordinate substrate: serine 49, aspartate 136, and asparagine 149. ATP-binding positions include 169-170 and 213-219; these read TD and TGGMATK. One can recognise a PUA domain in the interval 278–356; that stretch reads TGKLILDDGA…EDIPQVLGYA (79 aa).

This sequence belongs to the glutamate 5-kinase family.

It localises to the cytoplasm. It carries out the reaction L-glutamate + ATP = L-glutamyl 5-phosphate + ADP. It functions in the pathway amino-acid biosynthesis; L-proline biosynthesis; L-glutamate 5-semialdehyde from L-glutamate: step 1/2. Functionally, catalyzes the transfer of a phosphate group to glutamate to form L-glutamate 5-phosphate. This is Glutamate 5-kinase from Acaryochloris marina (strain MBIC 11017).